We begin with the raw amino-acid sequence, 177 residues long: MKALLLTFGLSLLAALQAQAFPTTEENQDVSGTWYLKAAAWDKEIPDKKFGSVSVTPMKIKTLEGGNLQVKFTVLIAGRCKEMSTVLEKTDEPAKYTAYSGKQVLYIIPSSVEDHYIFYYEGKIHRHHFQIAKLVGRDPEINQEALEDFQSVVRAGGLNPDNIFIPKQSETCPLGSN.

Positions 1–18 (MKALLLTFGLSLLAALQA) are cleaved as a signal peptide. The cysteines at positions 80 and 172 are disulfide-linked.

This sequence belongs to the calycin superfamily. Lipocalin family. In terms of assembly, homodimer.

The protein localises to the secreted. Could play a role in taste reception. Could be necessary for the concentration and delivery of sapid molecules in the gustatory system. The chain is von Ebner gland protein 1 (Vegp1) from Rattus norvegicus (Rat).